The primary structure comprises 245 residues: tRNA (guanine-N(1)-)-methyltransferase (245 aa).

Residues Gly-112 and 132-137 each bind S-adenosyl-L-methionine; that span reads IGDFVL.

This sequence belongs to the RNA methyltransferase TrmD family. Homodimer.

Its subcellular location is the cytoplasm. It carries out the reaction guanosine(37) in tRNA + S-adenosyl-L-methionine = N(1)-methylguanosine(37) in tRNA + S-adenosyl-L-homocysteine + H(+). Specifically methylates guanosine-37 in various tRNAs. The chain is tRNA (guanine-N(1)-)-methyltransferase from Geobacter sulfurreducens (strain ATCC 51573 / DSM 12127 / PCA).